Here is a 316-residue protein sequence, read N- to C-terminus: Cytochrome c biogenesis protein CcsA (316 aa).

8 consecutive transmembrane segments (helical) span residues 12–32, 44–64, 71–91, 98–118, 145–165, 222–242, 256–270, and 283–303; these read HISLSIILIVITIFLMNLLVY, GMVASFLCITGLLVIRWIYSG, LYESLMFLSWSFSIFYMIPYF, LNVLTAPGTIFTQGFATSGVL, LSYAALLCGSLLSVALLVILF, VISLGFLFLTIGILSGAVWAN, TWAFITWTIFAIYLH, and AIVASIGFFIIWICYFGVNLL.

It belongs to the CcmF/CycK/Ccl1/NrfE/CcsA family. In terms of assembly, may interact with Ccs1.

The protein localises to the plastid. Its subcellular location is the chloroplast thylakoid membrane. Its function is as follows. Required during biogenesis of c-type cytochromes (cytochrome c6 and cytochrome f) at the step of heme attachment. This Ranunculus macranthus (Large buttercup) protein is Cytochrome c biogenesis protein CcsA.